The chain runs to 138 residues: Basic phospholipase A2 homolog CTs-K49a (138 aa).

The N-terminal stretch at 1–16 (MRTLWIMAVLLVVVEG) is a signal peptide. Cystine bridges form between C42/C131, C44/C60, C59/C111, C65/C138, C66/C104, and C91/C102. The tract at residues 121-133 (KKKKINLKLFCKK) is important for membrane-damaging activities in eukaryotes and bacteria; heparin-binding.

The protein belongs to the phospholipase A2 family. Group II subfamily. K49 sub-subfamily. In terms of tissue distribution, expressed by the venom gland.

Its subcellular location is the secreted. Snake venom phospholipase A2 homolog that lacks catalytic activity. It shows myotoxic and weak anticoagulant activities. A model of myotoxic mechanism has been proposed: an apo Lys49-PLA2 is activated by the entrance of a hydrophobic molecule (e.g. fatty acid) at the hydrophobic channel of the protein leading to a reorientation of a monomer. This reorientation causes a transition between 'inactive' to 'active' states, causing alignment of C-terminal and membrane-docking sites (MDoS) side-by-side and putting the membrane-disruption sites (MDiS) in the same plane, exposed to solvent and in a symmetric position for both monomers. The MDoS region stabilizes the toxin on membrane by the interaction of charged residues with phospholipid head groups. Subsequently, the MDiS region destabilizes the membrane with penetration of hydrophobic residues. This insertion causes a disorganization of the membrane, allowing an uncontrolled influx of ions (i.e. calcium and sodium), and eventually triggering irreversible intracellular alterations and cell death. In Trimeresurus stejnegeri (Chinese green tree viper), this protein is Basic phospholipase A2 homolog CTs-K49a.